The following is a 278-amino-acid chain: Undecaprenyl-diphosphatase (278 aa).

A run of 8 helical transmembrane segments spans residues 2–22 (ALVE…TEWL), 44–64 (AFME…VVLL), 85–105 (IEMW…GLLW), 113–133 (FYNY…FIVI), 150–170 (ITYT…IFPG), 189–209 (TVAA…ASAL), 223–243 (LMIL…SIKF), and 253–273 (FKIF…YFSA).

The protein belongs to the UppP family.

It is found in the cell membrane. The catalysed reaction is di-trans,octa-cis-undecaprenyl diphosphate + H2O = di-trans,octa-cis-undecaprenyl phosphate + phosphate + H(+). Its function is as follows. Catalyzes the dephosphorylation of undecaprenyl diphosphate (UPP). Confers resistance to bacitracin. The chain is Undecaprenyl-diphosphatase from Desulfitobacterium hafniense (strain DSM 10664 / DCB-2).